The following is a 234-amino-acid chain: MAAKIFCLLMLLGLSASAATATIFTQCSQAPIASLLPPYLSSAVSSVCENPILQPYRIQQAIAAGILPLSPLFLQQSSALLQQLPLVHLLAQNIRAQQLQQLVLANLAAYSQQQQFLPFNQLGSLNSASYLQQQQLPFSQLPAAYPQQFLPFNQLAALNSPAYLQQQQLLPFSQLAGVSPATFLTQPQLLPFYQHVAPNAGTLLQLQQLLPFNQLALTNPAVFYQQPIIGGALF.

The first 21 residues, Met-1–Ala-21, serve as a signal peptide directing secretion.

This sequence belongs to the zein family.

In terms of biological role, zeins are major seed storage proteins. In Zea mays (Maize), this protein is Zein-alpha GZ19AB11.